The primary structure comprises 378 residues: Phospho-N-acetylmuramoyl-pentapeptide-transferase (378 aa).

A run of 11 helical transmembrane segments spans residues 26-46, 57-77, 103-123, 127-147, 171-191, 195-215, 225-245, 247-267, 275-295, 302-322, and 356-376; these read LFRLLAIGLLIVTIAYDTGAN, LPWLVSFALVAVLGMAVVPLL, MGGIFFVPTGLGLAFLWTGFA, LSPTVGAIALLVLWYAAIGWW, GIGAALFCAWLVASDPTATVV, WGWVWPLGMAFIPLAIFVPMA, GLDGLAGGTGAIALLTLGIIL, PYPDLQILAVVMSGACLGFLW, VFMGDTGSLALGAVLAGIGLA, LLIVSGLFFVESLSVIAQVLY, and IVRTFYGVVALLGLLCVLLQW.

This sequence belongs to the glycosyltransferase 4 family. MraY subfamily. The cofactor is Mg(2+).

It is found in the cell inner membrane. It catalyses the reaction UDP-N-acetyl-alpha-D-muramoyl-L-alanyl-gamma-D-glutamyl-meso-2,6-diaminopimeloyl-D-alanyl-D-alanine + di-trans,octa-cis-undecaprenyl phosphate = di-trans,octa-cis-undecaprenyl diphospho-N-acetyl-alpha-D-muramoyl-L-alanyl-D-glutamyl-meso-2,6-diaminopimeloyl-D-alanyl-D-alanine + UMP. Its pathway is cell wall biogenesis; peptidoglycan biosynthesis. Its function is as follows. Catalyzes the initial step of the lipid cycle reactions in the biosynthesis of the cell wall peptidoglycan: transfers peptidoglycan precursor phospho-MurNAc-pentapeptide from UDP-MurNAc-pentapeptide onto the lipid carrier undecaprenyl phosphate, yielding undecaprenyl-pyrophosphoryl-MurNAc-pentapeptide, known as lipid I. The chain is Phospho-N-acetylmuramoyl-pentapeptide-transferase from Thermosynechococcus vestitus (strain NIES-2133 / IAM M-273 / BP-1).